We begin with the raw amino-acid sequence, 440 residues long: Xaa-Pro dipeptidase (440 aa).

5 residues coordinate Mn(2+): D244, D255, H335, E380, and E419.

The protein belongs to the peptidase M24B family. Bacterial-type prolidase subfamily. The cofactor is Mn(2+).

The enzyme catalyses Xaa-L-Pro dipeptide + H2O = an L-alpha-amino acid + L-proline. Splits dipeptides with a prolyl residue in the C-terminal position. This Shewanella pealeana (strain ATCC 700345 / ANG-SQ1) protein is Xaa-Pro dipeptidase.